A 397-amino-acid chain; its full sequence is 1-deoxy-D-xylulose 5-phosphate reductoisomerase (397 aa).

6 residues coordinate NADPH: T17, G18, S19, I20, N47, and N130. K131 provides a ligand contact to 1-deoxy-D-xylulose 5-phosphate. E132 lines the NADPH pocket. Residue D156 participates in Mn(2+) binding. 1-deoxy-D-xylulose 5-phosphate contacts are provided by S157, E158, S182, and H205. E158 provides a ligand contact to Mn(2+). G211 serves as a coordination point for NADPH. Residues S218, N223, K224, and E227 each coordinate 1-deoxy-D-xylulose 5-phosphate. Residue E227 participates in Mn(2+) binding.

This sequence belongs to the DXR family. Requires Mg(2+) as cofactor. It depends on Mn(2+) as a cofactor.

It catalyses the reaction 2-C-methyl-D-erythritol 4-phosphate + NADP(+) = 1-deoxy-D-xylulose 5-phosphate + NADPH + H(+). Its pathway is isoprenoid biosynthesis; isopentenyl diphosphate biosynthesis via DXP pathway; isopentenyl diphosphate from 1-deoxy-D-xylulose 5-phosphate: step 1/6. In terms of biological role, catalyzes the NADPH-dependent rearrangement and reduction of 1-deoxy-D-xylulose-5-phosphate (DXP) to 2-C-methyl-D-erythritol 4-phosphate (MEP). The sequence is that of 1-deoxy-D-xylulose 5-phosphate reductoisomerase from Rhizobium rhizogenes (strain K84 / ATCC BAA-868) (Agrobacterium radiobacter).